Consider the following 1580-residue polypeptide: Collagen alpha-1(XVI) chain (1580 aa).

The signal sequence occupies residues 1-21; that stretch reads MLTSWAPGLWVLGLWATFSHG. N-linked (GlcNAc...) asparagine glycosylation occurs at asparagine 47. Residues 50–231 form the Laminin G-like domain; it reads GFNLIRRLNL…LQQAHIYCDP (182 aa). The nonhelical region 10 (NC10) stretch occupies residues 232–374; sequence ELVLEEGCCE…SPDAPLQCVE (143 aa). Residues 324–547 form a disordered region; the sequence is RESNVTLGPS…DPAPAWEGLG (224 aa). Asparagine 327 carries N-linked (GlcNAc...) asparagine glycosylation. Residues 375-424 form the Collagen-like 1 domain; the sequence is GPKGEKGESGDLGPPGLPGPTGQKGQKGEKGDGGLKGLPGKPGRDGRPGE. Residues 375–509 are triple-helical region 9 (COL9) with 3 imperfections; it reads GPKGEKGESG…PGTKGEKGDP (135 aa). The span at 449–460 shows a compositional bias: pro residues; sequence PGPPGLPGPPGI. Gly residues predominate over residues 486 to 495; sequence GKEGPGGKPG. The nonhelical region 9 (NC9) stretch occupies residues 510–524; the sequence is CEVCPTLPEGSQNFV. Residues 525–570 form a triple-helical region 8 (COL8) with 1 imperfection region; that stretch reads GLPGKPGPKGEPGDPAPAWEGLGTVGLKGDRGDPGIQGMKGEKGEP. A Cell attachment site motif is present at residues 555–557; it reads RGD. Residues 571–586 form a nonhelical region 8 (NC8) region; sequence CSSCSSGVGAQHLGPS. Residues 585–598 are compositionally biased toward low complexity; sequence PSPGHGLPGLPGTS. A disordered region spans residues 585–935; the sequence is PSPGHGLPGL…LPGQPGLTAE (351 aa). Residues 587–640 are triple-helical region 7 (COL7) with 1 imperfection; that stretch reads PGHGLPGLPGTSGIPGPRGLKGEKGSFGDTGPAGVPGSPGPVGPAGIKGAKGEP. Collagen-like domains are found at residues 590–643 and 676–725; these read GLPG…PCEP and GLPG…PAGP. Residues 641 to 661 are nonhelical region 7 (NC7); it reads CEPCTALSELQDGDMRVVHLP. Positions 662-732 are triple-helical region 6 (COL6) with 1 imperfection; the sequence is GPAGEKGEPG…AGPKGEKGDG (71 aa). The segment covering 683 to 693 has biased composition (basic and acidic residues); it reads KAGERGLKGQK. Positions 698-714 are enriched in low complexity; sequence NPGDPGTPGITGQPGIS. Residues 733–747 are nonhelical region 6 (NC6); that stretch reads CTACPSLQGALTDVS. Positions 748-870 are triple-helical region 5 (COL5) with 3 imperfections; it reads GLPGKPGPKG…RGEKGEPGEC (123 aa). Residues 797–848 form the Collagen-like 4 domain; the sequence is GAEGPQGEPGTQGLPGTQGLPGPRGPPGSAGEKGAQGSPGPKGAIGPMGPPG. Residues 801–817 show a composition bias toward low complexity; the sequence is PQGEPGTQGLPGTQGLP. Residues 871–881 are nonhelical region 5 (NC5); the sequence is SCPSRGEPIFS. The segment at 882-933 is triple-helical region 4 (COL4) with 2 imperfections; it reads GMPGAPGLWMGSSSQPGPQGPPGVPGPPGPPGMPGLQGVPGHNGLPGQPGLT. A compositionally biased stretch (pro residues) spans 899-914; the sequence is PQGPPGVPGPPGPPGM. The segment at 934 to 967 is nonhelical region 4 (NC4); sequence AELGSLPIEKHLLKSICGDCAQGQTAHPAFLLEK. The interval 968 to 982 is triple-helical region 3 (COL3); the sequence is GEKGDQGIPGVPGFD. The nonhelical region 3 (NC3) stretch occupies residues 983 to 1005; the sequence is NCARCFIERERPRAEEARGDNSE. 2 disordered regions span residues 995 to 1405 and 1445 to 1523; these read RAEE…LPGS and AAAP…GYGK. The short motif at 1000-1002 is the Cell attachment site element; sequence RGD. In terms of domain architecture, Collagen-like 5 spans 1006–1063; that stretch reads GEPGCSGSPGLPGPPGMPGQRGEEGPPGMRGSPGPPGPIGLQGERGLTGLTGDKGEPG. The interval 1006–1409 is triple-helical region 2 (COL2) with 2 imperfections; that stretch reads GEPGCSGSPG…PGLPGSMGDM (404 aa). The span at 1098–1107 shows a compositional bias: low complexity; it reads SGPPGSEGLP. Pro residues-rich tracts occupy residues 1139–1148 and 1178–1187; these read FPGPPGPPGF and SPGPPGPPGI. Basic and acidic residues predominate over residues 1196-1205; sequence LDGKDGKPGL. The Cell attachment site signature appears at 1206 to 1208; that stretch reads RGD. A Collagen-like 6 domain is found at 1210 to 1263; that stretch reads GPAGPPGLMGPPGFKGKTGHPGLPGPKGDCGKPGPPGSSGRPGAEGEPGAMGPQ. Residues 1247 to 1263 show a composition bias toward low complexity; it reads SSGRPGAEGEPGAMGPQ. Residues 1265-1281 show a composition bias toward pro residues; it reads RPGPPGHLGPPGQPGPP. 3 consecutive Collagen-like domains span residues 1350-1407, 1448-1500, and 1504-1552; these read GQKG…GSMG, PGRP…GDIG, and AGEN…GKAG. Positions 1362–1371 are enriched in gly residues; it reads GMPGGPGKSG. The span at 1396 to 1405 shows a compositional bias: low complexity; the sequence is NPGLPGLPGS. The nonhelical region 2 (NC2) stretch occupies residues 1410 to 1448; sequence VNYDDIKRFIRQEIIKLFDERMAYYTSRMQFPMEVAAAP. The tract at residues 1449 to 1554 is triple-helical region 1 (COL1) with 2 imperfections; it reads GRPGPPGKDG…MGQPGKAGHC (106 aa). The nonhelical region 1 (NC1) stretch occupies residues 1555–1580; sequence NPSDCFGAMPMEQQYPPMKSMKGPFG.

This sequence belongs to the fibril-associated collagens with interrupted helices (FACIT) family. As to quaternary structure, homotrimer. Interacts with FBN1, fibronectin and integrins ITGA1/ITGB1 and ITGA2/ITGB1. Integrin ITGA1/ITGB1 binds to a unique site within COL16A1 located close to its C-terminal end between collagenous domains COL1-COL3. Prolines at the third position of the tripeptide repeating unit (G-X-Y) are hydroxylated in some or all of the chains. Post-translationally, glycosylated. Expressed in most tissues examined with highest levels of expression observed in heart. Strongly expressed in cortical and medullar regions of kidney and more weakly expressed in lung. Also detected in the ciliary muscle of the eye, on the serosa layer lining the muscularis externa of intestinal tissue, and in the perimysium membrane lining both the cardiac muscle bundle and the smooth muscle tissue of the small intestine. Strongly stained in particulate or granular structures. Not detected in brain or skeletal muscle.

The protein localises to the secreted. Its subcellular location is the extracellular space. It localises to the extracellular matrix. Involved in mediating cell attachment and inducing integrin-mediated cellular reactions, such as cell spreading and alterations in cell morphology. This is Collagen alpha-1(XVI) chain from Mus musculus (Mouse).